A 173-amino-acid chain; its full sequence is MVEMGSGAWLELGKGLWFILPAYIANLSACLFGGGRPLDFGKKLSDGRRLLGDGVTIRGFIVGVLAGAVVGLGEGLVVGDPWKAGDGFILGLGAMAGDAVGSFVKRRIGLERGAPAPVLDQLDFFVGAVLLYYLVYGWHPPGWVLVGLAILTLALHWLTNVIGYLLKLKEVPW.

5 helical membrane passes run 15-35 (GLWF…FGGG), 59-79 (GFIV…LVVG), 84-104 (AGDG…GSFV), 118-138 (VLDQ…VYGW), and 142-162 (GWVL…TNVI).

It belongs to the CDP-archaeol synthase family. Mg(2+) is required as a cofactor.

It localises to the cell membrane. It carries out the reaction 2,3-bis-O-(geranylgeranyl)-sn-glycerol 1-phosphate + CTP + H(+) = CDP-2,3-bis-O-(geranylgeranyl)-sn-glycerol + diphosphate. It functions in the pathway membrane lipid metabolism; glycerophospholipid metabolism. In terms of biological role, catalyzes the formation of CDP-2,3-bis-(O-geranylgeranyl)-sn-glycerol (CDP-archaeol) from 2,3-bis-(O-geranylgeranyl)-sn-glycerol 1-phosphate (DGGGP) and CTP. This reaction is the third ether-bond-formation step in the biosynthesis of archaeal membrane lipids. The chain is CDP-archaeol synthase from Methanopyrus kandleri (strain AV19 / DSM 6324 / JCM 9639 / NBRC 100938).